Consider the following 167-residue polypeptide: tRNA-specific adenosine deaminase (167 aa).

The 112-residue stretch at 6-117 (FSHEYWMRHA…DAKTGAAGSL (112 aa)) folds into the CMP/dCMP-type deaminase domain. A Zn(2+)-binding site is contributed by H57. E59 acts as the Proton donor in catalysis. The Zn(2+) site is built by C87 and C90.

Belongs to the cytidine and deoxycytidylate deaminase family. In terms of assembly, homodimer. Requires Zn(2+) as cofactor.

It carries out the reaction adenosine(34) in tRNA + H2O + H(+) = inosine(34) in tRNA + NH4(+). Functionally, catalyzes the deamination of adenosine to inosine at the wobble position 34 of tRNA(Arg2). This is tRNA-specific adenosine deaminase from Escherichia coli O157:H7.